We begin with the raw amino-acid sequence, 634 residues long: Kelch-like protein 22 (634 aa).

At Ala-2 the chain carries N-acetylalanine. Residues Phe-50–Leu-117 enclose the BTB domain. 6 Kelch repeats span residues Cys-299–Asn-349, Phe-350–Lys-399, Tyr-400–Gly-446, Met-448–Asp-493, Lys-494–Asn-544, and Arg-545–Leu-593. At Thr-463 the chain carries Phosphothreonine. Tyr-466 carries the phosphotyrosine modification. Thr-475 is subject to Phosphothreonine. Positions Glu-600–Asp-634 are disordered. Position 605 is a phosphothreonine (Thr-605). The span at Asp-624 to Asp-634 shows a compositional bias: acidic residues.

As to quaternary structure, component of the BCR(KLHL22) E3 ubiquitin ligase complex, at least composed of CUL3, KLHL22 and RBX1. Interacts with PLK1. Interacts with DEPDC5 (via DEP domain); the interaction depends on amino acid availability. Interacts with YWHAE; required for the nuclear localization of KLHL22 upon amino acid starvation.

The protein resides in the cytoplasm. The protein localises to the cytosol. Its subcellular location is the cytoskeleton. It localises to the microtubule organizing center. It is found in the centrosome. The protein resides in the spindle. The protein localises to the nucleus. Its subcellular location is the lysosome. It participates in protein modification; protein ubiquitination. Substrate-specific adapter of a BCR (BTB-CUL3-RBX1) E3 ubiquitin ligase complex required for chromosome alignment and localization of PLK1 at kinetochores. The BCR(KLHL22) ubiquitin ligase complex mediates monoubiquitination of PLK1, leading to PLK1 dissociation from phosphoreceptor proteins and subsequent removal from kinetochores, allowing silencing of the spindle assembly checkpoint (SAC) and chromosome segregation. Monoubiquitination of PLK1 does not lead to PLK1 degradation. The BCR(KLHL22) ubiquitin ligase complex is also responsible for the amino acid-stimulated 'Lys-48' polyubiquitination and proteasomal degradation of DEPDC5. Through the degradation of DEPDC5, releases the GATOR1 complex-mediated inhibition of the TORC1 pathway. It is therefore an amino acid-dependent activator within the amino acid-sensing branch of the TORC1 pathway, indirectly regulating different cellular processes including cell growth and autophagy. The sequence is that of Kelch-like protein 22 from Rattus norvegicus (Rat).